Here is a 595-residue protein sequence, read N- to C-terminus: Elongation factor 4 (595 aa).

A tr-type G domain is found at 2–184; sequence KNIRNFSIIA…QIVERIPTPK (183 aa). Residues 14 to 19 and 131 to 134 each bind GTP; these read DHGKST and NKID.

Belongs to the TRAFAC class translation factor GTPase superfamily. Classic translation factor GTPase family. LepA subfamily.

It localises to the cell inner membrane. The catalysed reaction is GTP + H2O = GDP + phosphate + H(+). Required for accurate and efficient protein synthesis under certain stress conditions. May act as a fidelity factor of the translation reaction, by catalyzing a one-codon backward translocation of tRNAs on improperly translocated ribosomes. Back-translocation proceeds from a post-translocation (POST) complex to a pre-translocation (PRE) complex, thus giving elongation factor G a second chance to translocate the tRNAs correctly. Binds to ribosomes in a GTP-dependent manner. The polypeptide is Elongation factor 4 (Vesicomyosocius okutanii subsp. Calyptogena okutanii (strain HA)).